Reading from the N-terminus, the 126-residue chain is Protein ApaG (126 aa).

In terms of domain architecture, ApaG spans 2 to 126 (SDPRYQVDVS…FRLAVPGALH (125 aa)).

In Pseudomonas fluorescens (strain Pf0-1), this protein is Protein ApaG.